The following is a 371-amino-acid chain: Transcription factor bHLH77 (371 aa).

3 disordered regions span residues 1 to 25 (MNMDKETEQTLNYLPLGQSDPFGNG), 65 to 206 (SGGI…SLAE), and 352 to 371 (QSNNNNNNCSEPTLQMKLEP). The segment covering 85 to 96 (SQPTTQESNKSS) has biased composition (polar residues). A compositionally biased stretch (low complexity) spans 128-142 (SPASSSLTASNSKVS). The segment covering 165-190 (GVEKCDSKGDNKDDAKPPEAPKDYIH) has biased composition (basic and acidic residues). The region spanning 197–247 (QATDSHSLAERARREKISERMTLLQDLVPGCNRITGKAVMLDEIINYVQSL) is the bHLH domain.

Homodimer. Interacts with IBH1. Expressed constitutively in roots, leaves, stems, and flowers.

The protein resides in the nucleus. This Arabidopsis thaliana (Mouse-ear cress) protein is Transcription factor bHLH77 (BHLH77).